A 433-amino-acid polypeptide reads, in one-letter code: AP-2 complex subunit mu (433 aa).

Positions 168 to 432 constitute an MHD domain; that stretch reads RNELFLDVLE…IGRSGIYETR (265 aa). 3 residues coordinate a 1,2-diacyl-sn-glycero-3-phospho-(1D-myo-inositol-3,4,5-trisphosphate): Lys339, Lys343, and Lys352.

This sequence belongs to the adaptor complexes medium subunit family. In terms of assembly, adaptor protein complex 2 (AP-2) is a heterotetramer composed of two large adaptins (alpha-type subunit and beta-type subunit), a medium adaptin (mu-type subunit) and a small adaptin (sigma-type subunit).

The protein localises to the cell membrane. The protein resides in the membrane. Its subcellular location is the coated pit. Component of the adaptor complexes which link clathrin to receptors in coated vesicles. Clathrin-associated protein complexes are believed to interact with the cytoplasmic tails of membrane proteins, leading to their selection and concentration. AP50 is a subunit of the plasma membrane adaptor. The complex binds polyphosphoinositide-containing lipids. In Gallus gallus (Chicken), this protein is AP-2 complex subunit mu (AP2M1).